A 365-amino-acid polypeptide reads, in one-letter code: Ribosome biogenesis regulatory protein homolog (365 aa).

Met-1 is subject to N-acetylmethionine. Ser-5 is subject to Phosphoserine. Glycyl lysine isopeptide (Lys-Gly) (interchain with G-Cter in SUMO2) cross-links involve residues Lys-154 and Lys-226. Positions 233-253 (GRFQERLPKEKVPRGSGKKRK) are disordered. Residues 235 to 245 (FQERLPKEKVP) show a composition bias toward basic and acidic residues. Lys-266 participates in a covalent cross-link: Glycyl lysine isopeptide (Lys-Gly) (interchain with G-Cter in SUMO2). Arg-273 carries the citrulline modification. The segment at 280–365 (PQLDVTRATN…GQRPGGKRRK (86 aa)) is disordered. Residues 302-325 (KRRKMSQKGKRKGGRQGPGGKRKG) are compositionally biased toward basic residues. Gly residues predominate over residues 337–350 (GLGGKMNSGPPGLG). Residues 351–365 (GKRKGGQRPGGKRRK) show a composition bias toward basic residues.

It belongs to the RRS1 family. In terms of assembly, component of a hexameric 5S RNP precursor complex, composed of 5S RNA, RRS1, RPF2/BXDC1, RPL5, RPL11 and HEATR3; this complex acts as a precursor for ribosome assembly. In terms of processing, citrullinated by PADI4.

It localises to the nucleus. The protein localises to the nucleolus. Its function is as follows. Involved in ribosomal large subunit assembly. May regulate the localization of the 5S RNP/5S ribonucleoprotein particle to the nucleolus. The sequence is that of Ribosome biogenesis regulatory protein homolog (RRS1) from Homo sapiens (Human).